A 189-amino-acid chain; its full sequence is Potassium-transporting ATPase KdpC subunit (189 aa).

The helical transmembrane segment at 10-30 (ITLVFCVFFSVFYILILWLFA) threads the bilayer.

The protein belongs to the KdpC family. As to quaternary structure, the system is composed of three essential subunits: KdpA, KdpB and KdpC.

It is found in the cell inner membrane. Its function is as follows. Part of the high-affinity ATP-driven potassium transport (or Kdp) system, which catalyzes the hydrolysis of ATP coupled with the electrogenic transport of potassium into the cytoplasm. This subunit acts as a catalytic chaperone that increases the ATP-binding affinity of the ATP-hydrolyzing subunit KdpB by the formation of a transient KdpB/KdpC/ATP ternary complex. This Bacteroides thetaiotaomicron (strain ATCC 29148 / DSM 2079 / JCM 5827 / CCUG 10774 / NCTC 10582 / VPI-5482 / E50) protein is Potassium-transporting ATPase KdpC subunit.